Here is a 36-residue protein sequence, read N- to C-terminus: Photosystem I reaction center subunit VIII (36 aa).

The chain crosses the membrane as a helical span at residues Pro-7–Tyr-29.

Belongs to the PsaI family.

It is found in the plastid. Its subcellular location is the chloroplast thylakoid membrane. May help in the organization of the PsaL subunit. The protein is Photosystem I reaction center subunit VIII of Adiantum capillus-veneris (Maidenhair fern).